The chain runs to 427 residues: Trigger factor (427 aa).

Residues Gly-163–Pro-248 enclose the PPIase FKBP-type domain.

The protein belongs to the FKBP-type PPIase family. Tig subfamily.

The protein localises to the cytoplasm. It catalyses the reaction [protein]-peptidylproline (omega=180) = [protein]-peptidylproline (omega=0). Involved in protein export. Acts as a chaperone by maintaining the newly synthesized protein in an open conformation. Functions as a peptidyl-prolyl cis-trans isomerase. This Streptococcus pneumoniae (strain 70585) protein is Trigger factor.